The chain runs to 150 residues: MNNPSTPSARRKARRFTLQALYQWQLAGAAVSDIEAQFLANQDFAKVDREYFHDLLHGVLGQVKTLDEQLTPYLDRRVEELSQVEKAILRLGAFELKERQDVPYRVVINEGIELAKVFGAEDSFKYVNGVLDKLARQLRYAEASERRPRD.

The protein belongs to the NusB family.

In terms of biological role, involved in transcription antitermination. Required for transcription of ribosomal RNA (rRNA) genes. Binds specifically to the boxA antiterminator sequence of the ribosomal RNA (rrn) operons. The chain is Transcription antitermination protein NusB from Alcanivorax borkumensis (strain ATCC 700651 / DSM 11573 / NCIMB 13689 / SK2).